The sequence spans 117 residues: MRKSYRIKKESEFQRVFETHNSVANHKFVVYQMEKPGQKHFRVGISVGKKIGNAVHRNWVKRRIRQTLLEVKPQLRSDVDFLVIARSAADGLSMAETKKNLVHVLNRAHLLDEKSED.

This sequence belongs to the RnpA family. Consists of a catalytic RNA component (M1 or rnpB) and a protein subunit.

The catalysed reaction is Endonucleolytic cleavage of RNA, removing 5'-extranucleotides from tRNA precursor.. Its function is as follows. RNaseP catalyzes the removal of the 5'-leader sequence from pre-tRNA to produce the mature 5'-terminus. It can also cleave other RNA substrates such as 4.5S RNA. The protein component plays an auxiliary but essential role in vivo by binding to the 5'-leader sequence and broadening the substrate specificity of the ribozyme. This chain is Ribonuclease P protein component, found in Limosilactobacillus reuteri subsp. reuteri (strain JCM 1112) (Lactobacillus reuteri).